The following is a 689-amino-acid chain: MAQHTFLVEIGTAELPPKALRSLAEAFADNLKSELTKADLAFGDVEWFASPRRLALKVSELAGEQPSKSVEKRGPAVAQAFDAEGKPTKAAEGWARGNGITVEQAERLVTDKGEWLVHTAKVEGRPAKDLLGELVSQALAKLPIPKMMRWGDKTIQFVRPVFTVTLLLDGELVPAHILGIDSARTLRGHRFMGESEFTIDNASQYPQILQERGMVIADFMARKVKIKADAEAAAAAFGGVADLDDALLEEVTALVEWPVVLTANFEEKFLAVPAEALVHTMKGDQKYFPVYDKNGKLLPKFIFVTNIESKDPSQIISGNEKVVRPRLSDAEFFFKTDLKQTLASRLPRLETVLFQQQLGTVKAKVERIETVAGFIAERIGADVAQAKRAGLLSKCDLMTNMVGEFTDTQGVMGMHYARHDGEDEAVAVALNEQYMPRFAGDALPSGLVACAVALADKFDTLAGIFGIGMLPKGDKDPFALRRAAIGALRIMTEKQLDLDLVELVEEAVRVYGDKLTNKTVVTDVVDFMLGRFRAAYQDEGIGADVVLAVLARRPTRPLDFDRRVKAVSHFRSLDAALALAAANKRVSNILAKVEGELPTAVKPELLVDAAEKALATQVAELQAELAPLFAAGDYQAALTRLAALREPVDTFFNEVMVMADDEALKANRLALLNNLRNLFLQVADISLLQ.

Belongs to the class-II aminoacyl-tRNA synthetase family. Tetramer of two alpha and two beta subunits.

It localises to the cytoplasm. It catalyses the reaction tRNA(Gly) + glycine + ATP = glycyl-tRNA(Gly) + AMP + diphosphate. The chain is Glycine--tRNA ligase beta subunit from Aeromonas hydrophila subsp. hydrophila (strain ATCC 7966 / DSM 30187 / BCRC 13018 / CCUG 14551 / JCM 1027 / KCTC 2358 / NCIMB 9240 / NCTC 8049).